The chain runs to 924 residues: DNA repair and recombination protein RDH54 (924 aa).

The segment covering 1–10 (MQIPKYENKP) has biased composition (basic and acidic residues). Disordered regions lie at residues 1–21 (MQIP…GSNK) and 155–183 (EALS…NDGG). Low complexity predominate over residues 168 to 178 (TTSTTETVPST). Residues 299–487 (LENDSDISGC…FTIIDFINPG (189 aa)) form the Helicase ATP-binding domain. Residue 346-353 (IPLTGLCK) coordinates ATP. Positions 472-475 (NDLN) match the DEGH box motif. Lys-615 participates in a covalent cross-link: Glycyl lysine isopeptide (Lys-Gly) (interchain with G-Cter in ubiquitin). A Helicase C-terminal domain is found at 631 to 790 (KLRVLMTLLE…DSEMRNKESS (160 aa)).

The protein belongs to the SNF2/RAD54 helicase family. Interacts with RAD51 and DMC1.

It is found in the nucleus. It catalyses the reaction ATP + H2O = ADP + phosphate + H(+). Involved in the recombinational repair of double-strand breaks (DSB) in DNA during mitosis and meiosis. Has DNA dependent ATPase activity. Promotes D-loop (displacement loop) formation with RAD51 recombinase. Modifies the topology of double-stranded DNA during the D-loop reaction to facilitate the invasion of the homologous duplex molecule by the initiating single-stranded DNA substrate. Required for adaptation from G2/M checkpoint arrest induced by a double strand break, by participating in monitoring the extent of single-stranded DNA produced by resection of DNA ends. This role is distinct from its roles in recombination. Promotes colocalization of RAD51 and DMC1 during meiotic recombination. Involved in crossover interference. In Saccharomyces cerevisiae (strain YJM789) (Baker's yeast), this protein is DNA repair and recombination protein RDH54 (RDH54).